We begin with the raw amino-acid sequence, 146 residues long: Dual specificity phosphatase Cdc25 (146 aa).

A Rhodanese domain is found at 34 to 135 (RRPNIAIIDV…WEASGKPVCR (102 aa)). Residue 45–48 (DEER) participates in substrate binding. His53 provides a ligand contact to Zn(2+). 68 to 71 (KISH) is a substrate binding site. The active-site Cysteine persulfide intermediate is the Cys86. A substrate-binding site is contributed by 90–92 (QVR). The Zn(2+) site is built by Cys134, Cys136, and Cys141.

This sequence belongs to the MPI phosphatase family. In terms of tissue distribution, expressed in roots and at lower levels in shoots (at protein level). Expressed in leaves, stems and flowers.

The protein resides in the nucleus. It carries out the reaction O-phospho-L-tyrosyl-[protein] + H2O = L-tyrosyl-[protein] + phosphate. The enzyme catalyses [glutaredoxin]-dithiol + arsenate + glutathione + H(+) = glutathionyl-S-S-[glutaredoxin] + arsenite + H2O. With respect to regulation, inhibited by NSC95397. Tyrosine protein phosphatase that dephosphorylates CDK complex and activate its kinase activity in vitro. Functionally, arsenate reductase that plays a major role in the reduction of arsenate to arsenite and arsenic retention in roots. Has an in vitro and in vivo arsenate reductase activity. Plays no role in arsenic metabolism. This is Dual specificity phosphatase Cdc25 from Arabidopsis thaliana (Mouse-ear cress).